The chain runs to 367 residues: tRNA uridine(34) hydroxylase (367 aa).

Residues 159–253 (EDENSIVVDV…YAHEVSQKGL (95 aa)) enclose the Rhodanese domain. The Cysteine persulfide intermediate role is filled by Cys213.

The protein belongs to the TrhO family.

The catalysed reaction is uridine(34) in tRNA + AH2 + O2 = 5-hydroxyuridine(34) in tRNA + A + H2O. Its function is as follows. Catalyzes oxygen-dependent 5-hydroxyuridine (ho5U) modification at position 34 in tRNAs. This is tRNA uridine(34) hydroxylase from Leptospira interrogans serogroup Icterohaemorrhagiae serovar Lai (strain 56601).